The chain runs to 465 residues: 23S rRNA (uracil(1939)-C(5))-methyltransferase RlmD (465 aa).

Residues 1–24 are disordered; that stretch reads MSEAVPLSTRRASSAGDAPGRAPV. Residues 16–80 enclose the TRAM domain; that stretch reads GDAPGRAPVL…PTYEQAQVVD (65 aa). 4 residues coordinate [4Fe-4S] cluster: Cys-93, Cys-99, Cys-102, and Cys-181. S-adenosyl-L-methionine is bound by residues Gln-289, Phe-318, Asn-323, Glu-339, Asn-367, and Asp-388. The Nucleophile role is filled by Cys-421.

This sequence belongs to the class I-like SAM-binding methyltransferase superfamily. RNA M5U methyltransferase family. RlmD subfamily.

It catalyses the reaction uridine(1939) in 23S rRNA + S-adenosyl-L-methionine = 5-methyluridine(1939) in 23S rRNA + S-adenosyl-L-homocysteine + H(+). Its function is as follows. Catalyzes the formation of 5-methyl-uridine at position 1939 (m5U1939) in 23S rRNA. This chain is 23S rRNA (uracil(1939)-C(5))-methyltransferase RlmD, found in Burkholderia mallei (strain ATCC 23344).